A 131-amino-acid chain; its full sequence is Large ribosomal subunit protein bL17 (131 aa).

The protein belongs to the bacterial ribosomal protein bL17 family. Part of the 50S ribosomal subunit. Contacts protein L32.

The sequence is that of Large ribosomal subunit protein bL17 from Polynucleobacter necessarius subsp. necessarius (strain STIR1).